The chain runs to 173 residues: Pyrimidine operon regulatory protein (173 aa).

Substrate contacts are provided by residues 40–41, 97–105, and Arg-130; these read TR and DDVLYTGRT. The PRPP-binding motif lies at 93–105; it reads VILVDDVLYTGRT.

Belongs to the purine/pyrimidine phosphoribosyltransferase family. PyrR subfamily.

Functionally, regulates transcriptional attenuation of the pyrimidine nucleotide (pyr) operon in response to exogenous pyrimidines, probably by binding to specific sites on pyr mRNA. This probably disrupts an antiterminator hairpin in the RNA and favors formation of a downstream transcription terminator, leading to a reduced expression of downstream genes. This Lactococcus lactis subsp. lactis (strain IL1403) (Streptococcus lactis) protein is Pyrimidine operon regulatory protein.